The primary structure comprises 152 residues: Ubiquitin-conjugating enzyme E2 B (152 aa).

A UBC core domain is found at 4 to 150 (PARRRLMRDF…VSAIVEQSWN (147 aa)). The active-site Glycyl thioester intermediate is cysteine 88.

This sequence belongs to the ubiquitin-conjugating enzyme family. As to quaternary structure, interacts with RAD18, UBR2 and WAC.

The protein resides in the cell membrane. It localises to the nucleus. The catalysed reaction is S-ubiquitinyl-[E1 ubiquitin-activating enzyme]-L-cysteine + [E2 ubiquitin-conjugating enzyme]-L-cysteine = [E1 ubiquitin-activating enzyme]-L-cysteine + S-ubiquitinyl-[E2 ubiquitin-conjugating enzyme]-L-cysteine.. It participates in protein modification; protein ubiquitination. In terms of biological role, E2 ubiquitin-conjugating enzyme that accepts ubiquitin from the ubiquitin-activating enzyme E1 and transfers it to a E3 ubiquitin-protein ligase. In vitro catalyzes 'Lys-11'-, as well as 'Lys-48'- and 'Lys-63'-linked polyubiquitination. Together with the E3 enzyme BRE1 (RNF20 and/or RNF40), plays a role in transcription regulation by catalyzing the monoubiquitination of histone H2B at 'Lys-120' to form H2BK120ub1. H2BK120ub1 gives a specific tag for epigenetic transcriptional activation, elongation by RNA polymerase II, telomeric silencing, and is also a prerequisite for H3K4me and H3K79me formation. May play a role in DNA repair. Associates to the E3 ligase RAD18 to form the UBE2B-RAD18 ubiquitin ligase complex involved in mono-ubiquitination of DNA-associated PCNA on 'Lys-164'. In association with the E3 enzyme UBR4, is involved in N-end rule-dependent protein degradation. May be involved in neurite outgrowth. This Bos taurus (Bovine) protein is Ubiquitin-conjugating enzyme E2 B (UBE2B).